The chain runs to 118 residues: Appetite-regulating hormone (118 aa).

A signal peptide spans 1–24 (MPSTGTICSLLLLSVLLMADLAMA). Serine 27 is lipidated: O-decanoyl serine; alternate. The O-hexanoyl serine; alternate moiety is linked to residue serine 27. The O-octanoyl serine; alternate moiety is linked to residue serine 27. The disordered stretch occupies residues 29-50 (LSPEHQKVQQRKESKKPAAKLK). The segment covering 32 to 44 (EHQKVQQRKESKK) has biased composition (basic and acidic residues). A propeptide spans 53-76 (ALEGWLGPEDSGEVEGTEDKLEIR) (removed in mature form). Leucine 99 carries the leucine amide modification. Positions 100-118 (GKFLQDILWEEVTEAPADK) are cleaved as a propeptide — removed in mature form.

It belongs to the motilin family. O-octanoylated by GOAT/MBOAT4. O-octanoylation is essential for ghrelin activity. In terms of processing, amidation of Leu-99 is essential for obestatin activity.

It localises to the secreted. In terms of biological role, ghrelin is the ligand for growth hormone secretagogue receptor type 1 (GHSR). Induces the release of growth hormone from the pituitary. Has an appetite-stimulating effect, induces adiposity and stimulates gastric acid secretion. Involved in growth regulation. Obestatin may be the ligand for GPR39. May have an appetite-reducing effect resulting in decreased food intake. May reduce gastric emptying activity and jejunal motility. This Sus scrofa (Pig) protein is Appetite-regulating hormone (GHRL).